The sequence spans 309 residues: Glutamyl-Q tRNA(Asp) synthetase (309 aa).

Residues 8–12 (RFSPS) and E44 each bind L-glutamate. Positions 11–21 (PSPTGPLHAGS) match the 'HIGH' region motif. 4 residues coordinate Zn(2+): C100, C102, Y126, and C130. L-glutamate-binding residues include Y205 and R223. Residues 261–265 (KLSKQ) carry the 'KMSKS' region motif. K264 is an ATP binding site.

This sequence belongs to the class-I aminoacyl-tRNA synthetase family. GluQ subfamily. Zn(2+) is required as a cofactor.

In terms of biological role, catalyzes the tRNA-independent activation of glutamate in presence of ATP and the subsequent transfer of glutamate onto a tRNA(Asp). Glutamate is transferred on the 2-amino-5-(4,5-dihydroxy-2-cyclopenten-1-yl) moiety of the queuosine in the wobble position of the QUC anticodon. This Albidiferax ferrireducens (strain ATCC BAA-621 / DSM 15236 / T118) (Rhodoferax ferrireducens) protein is Glutamyl-Q tRNA(Asp) synthetase.